The primary structure comprises 715 residues: ATP-dependent zinc metalloprotease YME1L1 (715 aa).

The tract at residues 31–54 (VSVNTSASPKQHRDTVAEHEAPSS) is disordered. Residues 41–52 (QHRDTVAEHEAP) are compositionally biased toward basic and acidic residues. Residues 238–258 (ILFVLLLFGIYGLLKNPFLSV) form a helical membrane-spanning segment. ATP contacts are provided by V283, T325, G326, K327, T328, and L329. Position 541 (H541) interacts with Zn(2+). The active site involves E542. Zn(2+) contacts are provided by H545 and D619.

This sequence in the N-terminal section; belongs to the AAA ATPase family. It in the C-terminal section; belongs to the peptidase M41 family. In terms of assembly, homohexamer; may also form heterohexamers. Exists in several complexes of 600-1100 kDa. Interacts with AFG1L. It depends on Zn(2+) as a cofactor. In terms of processing, proteolytically processed by mitochondrial processing peptidase (MPP) to generate the mature form. Degraded in an OMA1-dependent manner in response to oxidative stress.

It localises to the mitochondrion inner membrane. The protein resides in the mitochondrion. The catalysed reaction is ATP + H2O = ADP + phosphate + H(+). Functionally, ATP-dependent metalloprotease that catalyzes the degradation of folded and unfolded proteins with a suitable degron sequence in the mitochondrial intermembrane region. Plays an important role in regulating mitochondrial morphology and function by cleaving OPA1 at position S2, giving rise to a form of OPA1 that promotes maintenance of normal mitochondrial structure and mitochondrial protein metabolism. Ensures cell proliferation, maintains normal cristae morphology and complex I respiration activity, promotes antiapoptotic activity and protects mitochondria from the accumulation of oxidatively damaged membrane proteins. Required to control the accumulation of nonassembled respiratory chain subunits (NDUFB6, OX4 and ND1). Involved in the mitochondrial adaptation in response to various signals, such as stress or developmental cues, by mediating degradation of mitochondrial proteins to rewire the mitochondrial proteome. Catalyzes degradation of mitochondrial proteins, such as translocases, lipid transfer proteins and metabolic enzymes in response to nutrient starvation in order to limit mitochondrial biogenesis: mechanistically, YME1L is activated by decreased phosphatidylethanolamine levels caused by LPIN1 activity in response to mTORC1 inhibition. Acts as a regulator of adult neural stem cell self-renewal by promoting mitochondrial proteome rewiring, preserving neural stem and progenitor cells self-renewal. Required for normal, constitutive degradation of PRELID1. Catalyzes the degradation of OMA1 in response to membrane depolarization. Mediates degradation of TIMM17A downstream of the integrated stress response (ISR). Catalyzes degradation of MICU1 when MICU1 is not assembled via an interchain disulfide. This is ATP-dependent zinc metalloprotease YME1L1 (Yme1l1) from Rattus norvegicus (Rat).